Consider the following 125-residue polypeptide: Small ribosomal subunit protein bS6 (125 aa).

The disordered stretch occupies residues 101–125 (PMMKEEKAKNLLAPQSDAAEPTAAA).

Belongs to the bacterial ribosomal protein bS6 family.

Functionally, binds together with bS18 to 16S ribosomal RNA. The chain is Small ribosomal subunit protein bS6 from Laribacter hongkongensis (strain HLHK9).